The chain runs to 215 residues: MLQVYLVRHGETQWNAERRIQGQSDSPLTAHGERQAWQVGERARTLGITHIITSDLGRTRRTAEIIAEACGCSVIADARLRELDMGVLEKRHIDSLSEEEEGWRRQLVNGTPDGRIPQGESMQELSERMHAALASCLELPAGSRPLLVSHGIALGCLVSTILGLPAYAERRLRLRNCSISRVDYQQSPWLASGWVVETAGDVSHLDAPAMDELQR.

Substrate contacts are provided by residues 8–15 (RHGETQWN), 21–22 (QG), R58, R60, 82–85 (ELDM), 104–105 (RR), and 151–152 (GI). Residue H9 is the Tele-phosphohistidine intermediate of the active site. E82 acts as the Proton donor/acceptor in catalysis.

The protein belongs to the phosphoglycerate mutase family. GpmB subfamily.

It catalyses the reaction (2R)-2-phosphoglycerate = (2R)-3-phosphoglycerate. It functions in the pathway carbohydrate degradation; glycolysis; pyruvate from D-glyceraldehyde 3-phosphate: step 3/5. In Klebsiella pneumoniae subsp. pneumoniae (strain ATCC 700721 / MGH 78578), this protein is Probable phosphoglycerate mutase GpmB.